The chain runs to 155 residues: MKNIIINIQYCCKNNKNIPKKLYFKKWIQKILCKKKNINIITIRIVDEWEIKKLNFNYRKKNKPTNILSFPFNKFIKINYKLLGDLVLCKNIIEKESLKYNKSLESHWAHITIHGTLHLLGYDHQNNKEADIMERLENKIMLSLNYKKPHILKSF.

Zn(2+) contacts are provided by H114, H118, and H124.

This sequence belongs to the endoribonuclease YbeY family. Requires Zn(2+) as cofactor.

Its subcellular location is the cytoplasm. Single strand-specific metallo-endoribonuclease involved in late-stage 70S ribosome quality control and in maturation of the 3' terminus of the 16S rRNA. This chain is Endoribonuclease YbeY, found in Buchnera aphidicola subsp. Acyrthosiphon pisum (strain APS) (Acyrthosiphon pisum symbiotic bacterium).